The following is a 475-amino-acid chain: Flotillin-like protein 4 (475 aa).

2 coiled-coil regions span residues Glu-235–Ala-255 and Gln-305–Glu-325.

This sequence belongs to the band 7/mec-2 family. Flotillin subfamily. Expressed in roots and nodules. Primarily expressed in vascular tissues. Upon induction of nodulation, expansion of expression in the root cortex in the region of elongating root hairs, which will eventually become colonized by bacteria. Expressed in the infection zone in nodules.

The protein localises to the membrane. It is found in the caveola. Its subcellular location is the cell membrane. May act as a scaffolding protein within caveolar membranes, functionally participating in formation of caveolae or caveolae-like vesicles. Required for normal infection threads initiation and elongation and nodulation. Probably involved in polar growth of the infection thread. The chain is Flotillin-like protein 4 (FLOT4) from Medicago truncatula (Barrel medic).